The chain runs to 218 residues: Hypoxanthine-guanine phosphoribosyltransferase (218 aa).

K69 contacts GMP. N6-acetyllysine is present on K103. K115 is covalently cross-linked (Glycyl lysine isopeptide (Lys-Gly) (interchain with G-Cter in SUMO1); alternate). Residue K115 forms a Glycyl lysine isopeptide (Lys-Gly) (interchain with G-Cter in SUMO2); alternate linkage. GMP-binding positions include 134–142 (EDIIDTGKT), K166, 186–188 (KFV), and D194. D138 serves as the catalytic Proton acceptor. Phosphothreonine is present on T142. D194 provides a ligand contact to Mg(2+).

Belongs to the purine/pyrimidine phosphoribosyltransferase family. In terms of assembly, homotetramer. It depends on Mg(2+) as a cofactor.

The protein resides in the cytoplasm. The enzyme catalyses IMP + diphosphate = hypoxanthine + 5-phospho-alpha-D-ribose 1-diphosphate. It carries out the reaction GMP + diphosphate = guanine + 5-phospho-alpha-D-ribose 1-diphosphate. It functions in the pathway purine metabolism; IMP biosynthesis via salvage pathway; IMP from hypoxanthine: step 1/1. Converts guanine to guanosine monophosphate, and hypoxanthine to inosine monophosphate. Transfers the 5-phosphoribosyl group from 5-phosphoribosylpyrophosphate onto the purine. Plays a central role in the generation of purine nucleotides through the purine salvage pathway. The chain is Hypoxanthine-guanine phosphoribosyltransferase (Hprt1) from Rattus norvegicus (Rat).